The chain runs to 475 residues: NADP-dependent glyceraldehyde-3-phosphate dehydrogenase (475 aa).

Arg-103 is a substrate binding site. Ser-151 contacts NADP(+). Asn-154 to Tyr-155 lines the substrate pocket. NADP(+)-binding positions include Lys-177, Thr-180, Asp-215, and Gly-230–Leu-251. Residues Glu-250 and Cys-284 contribute to the active site. Arg-283–Thr-285 provides a ligand contact to substrate. Glu-377 is an NADP(+) binding site. Substrate is bound at residue Arg-437.

Belongs to the aldehyde dehydrogenase family. As to quaternary structure, homotetramer.

It catalyses the reaction D-glyceraldehyde 3-phosphate + NADP(+) + H2O = (2R)-3-phosphoglycerate + NADPH + 2 H(+). In Streptococcus mutans serotype c (strain ATCC 700610 / UA159), this protein is NADP-dependent glyceraldehyde-3-phosphate dehydrogenase (gapN).